A 389-amino-acid polypeptide reads, in one-letter code: LL-diaminopimelate aminotransferase (389 aa).

Substrate contacts are provided by Y13 and G38. Pyridoxal 5'-phosphate contacts are provided by residues Y67, 101–102, Y126, N176, Y207, and 235–237; these read SK and SLS. Substrate-binding residues include K102, Y126, and N176. K238 bears the N6-(pyridoxal phosphate)lysine mark. Pyridoxal 5'-phosphate is bound at residue R246. R364 is a binding site for substrate.

This sequence belongs to the class-I pyridoxal-phosphate-dependent aminotransferase family. LL-diaminopimelate aminotransferase subfamily. In terms of assembly, homodimer. Pyridoxal 5'-phosphate serves as cofactor.

The enzyme catalyses (2S,6S)-2,6-diaminopimelate + 2-oxoglutarate = (S)-2,3,4,5-tetrahydrodipicolinate + L-glutamate + H2O + H(+). Its pathway is amino-acid biosynthesis; L-lysine biosynthesis via DAP pathway; LL-2,6-diaminopimelate from (S)-tetrahydrodipicolinate (aminotransferase route): step 1/1. In terms of biological role, involved in the synthesis of meso-diaminopimelate (m-DAP or DL-DAP), required for both lysine and peptidoglycan biosynthesis. Catalyzes the direct conversion of tetrahydrodipicolinate to LL-diaminopimelate. This chain is LL-diaminopimelate aminotransferase, found in Halothermothrix orenii (strain H 168 / OCM 544 / DSM 9562).